Reading from the N-terminus, the 219-residue chain is Probable octanoyltransferase (219 aa).

One can recognise a BPL/LPL catalytic domain in the interval glutamine 43–lysine 219. Substrate contacts are provided by residues arginine 83–histidine 90, alanine 151–glycine 153, and glycine 164–alanine 166. The active-site Acyl-thioester intermediate is cysteine 182.

The protein belongs to the LipB family.

The catalysed reaction is octanoyl-[ACP] + L-lysyl-[protein] = N(6)-octanoyl-L-lysyl-[protein] + holo-[ACP] + H(+). It functions in the pathway protein modification; protein lipoylation via endogenous pathway; protein N(6)-(lipoyl)lysine from octanoyl-[acyl-carrier-protein]: step 1/2. In terms of biological role, catalyzes the transfer of endogenously produced octanoic acid from octanoyl-acyl-carrier-protein onto the lipoyl domains of lipoate-dependent enzymes. Lipoyl-ACP can also act as a substrate although octanoyl-ACP is likely to be the physiological substrate. The chain is Probable octanoyltransferase from Schizosaccharomyces pombe (strain 972 / ATCC 24843) (Fission yeast).